Reading from the N-terminus, the 295-residue chain is Phosphonoacetaldehyde hydrolase (295 aa).

Asp36 acts as the Nucleophile in catalysis. Mg(2+) is bound by residues Asp36 and Ala38. Residue Lys78 is the Schiff-base intermediate with substrate of the active site. Asp212 is a Mg(2+) binding site.

This sequence belongs to the HAD-like hydrolase superfamily. PhnX family. Homodimer. Requires Mg(2+) as cofactor.

It carries out the reaction phosphonoacetaldehyde + H2O = acetaldehyde + phosphate + H(+). Functionally, involved in phosphonate degradation. The sequence is that of Phosphonoacetaldehyde hydrolase from Psychromonas ingrahamii (strain DSM 17664 / CCUG 51855 / 37).